Consider the following 102-residue polypeptide: Small ribosomal subunit protein uS10 (102 aa).

Belongs to the universal ribosomal protein uS10 family. As to quaternary structure, part of the 30S ribosomal subunit.

Its function is as follows. Involved in the binding of tRNA to the ribosomes. The polypeptide is Small ribosomal subunit protein uS10 (Chlorobium phaeobacteroides (strain BS1)).